Here is a 722-residue protein sequence, read N- to C-terminus: Probable dipeptidyl-peptidase 5 (722 aa).

An N-terminal signal peptide occupies residues M1–A18. 7 N-linked (GlcNAc...) asparagine glycosylation sites follow: N75, N78, N86, N94, N151, N253, and N448. S558 acts as the Charge relay system in catalysis. N-linked (GlcNAc...) asparagine glycosylation is present at N605. Residues D641 and H673 each act as charge relay system in the active site.

The protein belongs to the peptidase S9C family.

The protein resides in the secreted. Functionally, extracellular dipeptidyl-peptidase which removes N-terminal dipeptides sequentially from polypeptides having unsubstituted N-termini. This chain is Probable dipeptidyl-peptidase 5 (dpp5), found in Emericella nidulans (strain FGSC A4 / ATCC 38163 / CBS 112.46 / NRRL 194 / M139) (Aspergillus nidulans).